The primary structure comprises 139 residues: Gonadotropin subunit beta-2 (139 aa).

An N-terminal signal peptide occupies residues 1-24; sequence MFPLVLSLFLGATSDIWPLAPAEA. 6 cysteine pairs are disulfide-bonded: Cys30/Cys78, Cys44/Cys93, Cys47/Cys131, Cys55/Cys109, Cys59/Cys111, and Cys114/Cys121. N-linked (GlcNAc...) asparagine glycosylation occurs at Asn34.

The protein belongs to the glycoprotein hormones subunit beta family. In terms of assembly, heterodimer of an alpha and a beta chain.

It is found in the secreted. In terms of biological role, involved in gametogenesis and steroidogenesis. The protein is Gonadotropin subunit beta-2 (cgbb) of Morone saxatilis (Striped bass).